Consider the following 83-residue polypeptide: Small ribosomal subunit protein bS16 (83 aa).

This sequence belongs to the bacterial ribosomal protein bS16 family.

This Aromatoleum aromaticum (strain DSM 19018 / LMG 30748 / EbN1) (Azoarcus sp. (strain EbN1)) protein is Small ribosomal subunit protein bS16.